A 626-amino-acid chain; its full sequence is Chaperone protein HtpG (626 aa).

The a; substrate-binding stretch occupies residues 1–331 (MSETVERHEF…TDDLPLNVSR (331 aa)). The tract at residues 332 to 544 (EMLQSTPTLQ…GMGPDLQMQR (213 aa)) is b. The c stretch occupies residues 545-626 (LLRRAGRGFG…GTAAKPAESA (82 aa)).

Belongs to the heat shock protein 90 family. As to quaternary structure, homodimer.

The protein resides in the cytoplasm. Molecular chaperone. Has ATPase activity. This chain is Chaperone protein HtpG, found in Methylorubrum extorquens (strain PA1) (Methylobacterium extorquens).